Reading from the N-terminus, the 290-residue chain is Concanavalin-A (290 aa).

The first 29 residues, 1-29 (MAISKKSSLFLPIFTFITMFLMVVNKVSS), serve as a signal peptide directing secretion. A carbohydrate is bound by residues Asp-119 and Arg-139. Asp-119 serves as a coordination point for Ca(2+). A propeptide spanning residues 149-163 (VIRNSTTIDFNAAYN) is cleaved from the precursor. An N-linked (GlcNAc...) asparagine glycan is attached at Asn-152. Mn(2+) contacts are provided by Glu-171 and Asp-173. Residues Asp-173, Tyr-175, Asn-177, and Asp-182 each contribute to the Ca(2+) site. Asp-182 and His-187 together coordinate Mn(2+). 262–263 (LY) lines the a carbohydrate pocket. Positions 282–290 (EIPDIATVV) are excised as a propeptide.

It belongs to the leguminous lectin family. In terms of assembly, homotetramer. In terms of processing, the mature chain consists of residues 164-281 followed by 30-148. To form a mature chain the precursor undergoes further post-translational modification after removal of the signal sequence; cleavage after Asn at positions Asn-148, Asn-163, and Asn-281 is followed by transposition and ligation (By formation of a new peptide bond) of residues 164-281 and 30-148.

Its function is as follows. Glucose/D-mannose/rhamnose specific lectin. Has hemagglutinating activity towards rabbit erythrocytes. Has mitogenic activity towards murine splenocytes that is inhibited by glucose. Inhibits HIV-1 reverse transcriptase with an IC(50) of 35 uM. Has a potent antiproliferative activity against L1210 leukemia cells in vitro that is not inhibited by glucose. Inhibits translation in cell-free rabbit reticulocyte system with an IC(50) of 2.08 uM. Lacks anti-fungal activity against M.arachidicola, B.cenera and F.oxysporum. The polypeptide is Concanavalin-A (Canavalia gladiata (Sword bean)).